We begin with the raw amino-acid sequence, 1264 residues long: Ubiquitin carboxyl-terminal hydrolase usp-48 (1264 aa).

The USP domain occupies 108-430; sequence AGLINGGNFC…ACYGLLYRRR (323 aa). The active-site Nucleophile is Cys117. His366 functions as the Proton acceptor in the catalytic mechanism. 3 disordered regions span residues 390 to 415, 522 to 610, and 630 to 679; these read IPKP…KEKY, AKGE…IMDT, and TVEV…PVSS. Composition is skewed to basic and acidic residues over residues 403 to 415 and 532 to 543; these read KTEK…KEKY and EASENEEKKKNE. Residues 516–547 adopt a coiled-coil conformation; it reads AQEYEVAKGEKKKKKKEASENEEKKKNEEDEA. Positions 565-575 are enriched in low complexity; the sequence is SEPSTSAAATE. Composition is skewed to polar residues over residues 587–599 and 663–678; these read ETPN…STQV and NGTN…QPVS.

It belongs to the peptidase C19 family. In terms of tissue distribution, broadly expressed. Expressed in germline.

Its subcellular location is the nucleus. The protein resides in the chromosome. It carries out the reaction Thiol-dependent hydrolysis of ester, thioester, amide, peptide and isopeptide bonds formed by the C-terminal Gly of ubiquitin (a 76-residue protein attached to proteins as an intracellular targeting signal).. Its function is as follows. Recognizes and hydrolyzes the peptide bond at the C-terminal Gly of ubiquitin. Involved in the processing of poly-ubiquitin precursors as well as that of ubiquitinated proteins. Required post-developmentally to restrict the plasticity of epidermal cells, probably by regulating gene expression. The protein is Ubiquitin carboxyl-terminal hydrolase usp-48 of Caenorhabditis elegans.